The primary structure comprises 254 residues: 5'/3'-nucleotidase SurE (254 aa).

Residues D9, D10, S40, and N93 each contribute to the a divalent metal cation site.

The protein belongs to the SurE nucleotidase family. Requires a divalent metal cation as cofactor.

The protein localises to the cytoplasm. The catalysed reaction is a ribonucleoside 5'-phosphate + H2O = a ribonucleoside + phosphate. It carries out the reaction a ribonucleoside 3'-phosphate + H2O = a ribonucleoside + phosphate. It catalyses the reaction [phosphate](n) + H2O = [phosphate](n-1) + phosphate + H(+). Its function is as follows. Nucleotidase with a broad substrate specificity as it can dephosphorylate various ribo- and deoxyribonucleoside 5'-monophosphates and ribonucleoside 3'-monophosphates with highest affinity to 3'-AMP. Also hydrolyzes polyphosphate (exopolyphosphatase activity) with the preference for short-chain-length substrates (P20-25). Might be involved in the regulation of dNTP and NTP pools, and in the turnover of 3'-mononucleotides produced by numerous intracellular RNases (T1, T2, and F) during the degradation of various RNAs. The protein is 5'/3'-nucleotidase SurE of Photorhabdus laumondii subsp. laumondii (strain DSM 15139 / CIP 105565 / TT01) (Photorhabdus luminescens subsp. laumondii).